We begin with the raw amino-acid sequence, 845 residues long: Protein kintoun (845 aa).

The segment covering 362-382 (SKEQAQMHETLRHFSREDSGV) has biased composition (basic and acidic residues). 3 disordered regions span residues 362-420 (SKEQ…PVRH), 575-691 (QALK…SMSD), and 773-845 (AQHR…EMDD). Serine 380 bears the Phosphoserine mark. Residues 391-400 (PVEEDPDGEL) are compositionally biased toward acidic residues. The segment covering 584-593 (GTKEEEKENQ) has biased composition (basic and acidic residues). The span at 611 to 622 (KPGKKQRKRNKK) shows a compositional bias: basic residues. The span at 640-671 (LTKNSELQPKSTFNLPQRKQRSYSECNDSTGG) shows a compositional bias: polar residues. Residue serine 779 is modified to Phosphoserine. A compositionally biased stretch (polar residues) spans 794–804 (LKQQENQSRNC).

The protein belongs to the PIH1 family. Kintoun subfamily. As to quaternary structure, interacts with Pp1alpha-96A, Pp1-87B, Pp1-13C and flw.

The protein localises to the cytoplasm. In terms of biological role, required for cytoplasmic pre-assembly of axonemal dyneins, thereby playing a central role in motility in cilia and flagella. Involved in pre-assembly of dynein arm complexes in the cytoplasm before intraflagellar transport loads them for the ciliary compartment. The protein is Protein kintoun of Drosophila erecta (Fruit fly).